The sequence spans 412 residues: DNA replication and repair protein RecF (412 aa).

30 to 37 is an ATP binding site; that stretch reads GANGAGKT. Residues 369–412 form a disordered region; that stretch reads LQVRPGGGTAAVTPDPEYARGEATAANGAASAPTGADAASTSRD. Residues 389–412 show a composition bias toward low complexity; it reads GEATAANGAASAPTGADAASTSRD.

This sequence belongs to the RecF family.

It localises to the cytoplasm. The RecF protein is involved in DNA metabolism; it is required for DNA replication and normal SOS inducibility. RecF binds preferentially to single-stranded, linear DNA. It also seems to bind ATP. This chain is DNA replication and repair protein RecF, found in Salinibacter ruber (strain DSM 13855 / M31).